We begin with the raw amino-acid sequence, 24 residues long: Neurotoxin 5 (24 aa).

Positions 2-24 constitute an LCN-type CS-alpha/beta domain; that stretch reads RDAYIAQNYNCVYTCFKNDYCND.

Belongs to the long (4 C-C) scorpion toxin superfamily. Sodium channel inhibitor family. Alpha subfamily. In terms of tissue distribution, expressed by the venom gland.

The protein localises to the secreted. Its function is as follows. Binds to sodium channels (Nav) and inhibits the inactivation of the activated channels, thereby blocking neuronal transmission. The polypeptide is Neurotoxin 5 (Buthus occitanus tunetanus (Common European scorpion)).